We begin with the raw amino-acid sequence, 398 residues long: MTVEYETKQLTPAQIKIILDTVPILEEAGETLTQKFYQRMIGNYDEVKPFFNTTDQKLLRQPKILAFALLNYAKNIEDLTPLTDFVKQIVVKHIGLQVLPEHYPIVGTCLIQTMVELLPPEIANKDFLEAWTIAYGNLAKLLIDLEAAEYAKQPWRWFKDFKVTRIVQECKDVKSVYFTPVDKDLLPLPKPERGQYLCFRWKLPGEEFEISREYSVSEFPKENEYRISVRHVPGGKISGYIHNNLKVGDILKVAPPAGNFVYDPATDKELIFVAGGIGITPLLSMIERALEEGKNVKLLYSNRSAETRAFGNLFKEYKSKFGDKFQAIEYFSEDNNTDDKIVIDKAFNRKLTTDDLDFIAPEHDVYLVGPREFMKDIKEHLGKKNVPVKLEYFGPYDP.

Residues 9–147 (QLTPAQIKII…LAKLLIDLEA (139 aa)) form the Globin domain. Position 93 (H93) interacts with heme b. Residues Y103 and E146 each act as charge relay system in the active site. A reductase region spans residues 155–398 (WRWFKDFKVT…KLEYFGPYDP (244 aa)). An FAD-binding FR-type domain is found at 156-263 (RWFKDFKVTR…APPAGNFVYD (108 aa)). FAD contacts are provided by residues Y196 and 212–215 (REYS). Residue 276 to 281 (GIGITP) coordinates NADP(+). 395–398 (PYDP) is an FAD binding site.

It belongs to the globin family. Requires FAD as cofactor. It depends on heme b as a cofactor.

The protein resides in the cytoplasm. The enzyme catalyses 2 nitric oxide + NADPH + 2 O2 = 2 nitrate + NADP(+) + H(+). The catalysed reaction is 2 nitric oxide + NADH + 2 O2 = 2 nitrate + NAD(+) + H(+). With respect to regulation, inhibited by imidazoles. Nitric oxide dioxygenase involved in NO detoxification in an aerobic process, termed nitric oxide dioxygenase (NOD) reaction that utilizes O(2) and NAD(P)H to convert NO to nitrate, which protects the fungus from various noxious nitrogen compounds. Therefore, plays a central role in the inducible response to nitrosative stress. Plays a role in virulence since nitric oxide is generated by macrophages of the host immune system. The sequence is that of Flavohemoprotein (YHB1) from Candida albicans (strain SC5314 / ATCC MYA-2876) (Yeast).